Consider the following 574-residue polypeptide: Lipase maturation factor 1 (574 aa).

The tract at residues methionine 1–aspartate 39 is disordered. Over methionine 1–phenylalanine 49 the chain is Cytoplasmic. Residues tryptophan 50–phenylalanine 72 traverse the membrane as a helical segment. Topologically, residues asparagine 73 to aspartate 127 are lumenal. A helical transmembrane segment spans residues leucine 128–methionine 151. Residues threonine 152–leucine 207 are Cytoplasmic-facing. A helical membrane pass occupies residues tryptophan 208–alanine 221. At glycine 222–glycine 292 the chain is on the lumenal side. Residues valine 293 to alanine 321 form a helical membrane-spanning segment. At cysteine 322 to glutamine 367 the chain is on the cytoplasmic side. The helical transmembrane segment at valine 368–leucine 388 threads the bilayer. Residues leucine 389–arginine 574 lie on the Lumenal side of the membrane.

It belongs to the lipase maturation factor family. As to quaternary structure, interacts with LPL and SEL1L. In terms of tissue distribution, expressed in all tissues synthesizing lipoprotein lipase (Lpl) and hepatic lipase (Lipc), including adipose tissue, skeletal muscle, heart, and liver. Expressed at higher levels in tissues that express little or no lipase activity such as testis and pancreas suggesting additional functions in these tissues.

The protein resides in the endoplasmic reticulum membrane. Functionally, involved in the maturation of specific proteins in the endoplasmic reticulum. Required for maturation and transport of active lipoprotein lipase (LPL) through the secretory pathway. Each LMF1 molecule chaperones 50 or more molecules of LPL. The sequence is that of Lipase maturation factor 1 (Lmf1) from Mus musculus (Mouse).